A 91-amino-acid polypeptide reads, in one-letter code: Putative methyltransferase YfdM (91 aa).

This is Putative methyltransferase YfdM (yfdM) from Escherichia coli (strain K12).